Reading from the N-terminus, the 151-residue chain is Large ribosomal subunit protein eL19 (151 aa).

A compositionally biased stretch (basic residues) spans 57 to 81; that stretch reads KKGISSARVKKLKEQRKKGRRRGPG. Residues 57–95 form a disordered region; that stretch reads KKGISSARVKKLKEQRKKGRRRGPGSRRGAAGARTPPKE.

The protein belongs to the eukaryotic ribosomal protein eL19 family. Part of the 50S ribosomal subunit.

Functionally, binds to the 23S rRNA. This Methanocaldococcus jannaschii (strain ATCC 43067 / DSM 2661 / JAL-1 / JCM 10045 / NBRC 100440) (Methanococcus jannaschii) protein is Large ribosomal subunit protein eL19.